Here is a 130-residue protein sequence, read N- to C-terminus: MVRMNVLADALKSINNAEKRGKRQVLLRPCSKVIVRFLTVMMKHGYIGEFEIIDDHRAGKIVVNLTGRLNKCGVISPRFDVQLKDLEKWQNNLLPSRQFGFIVLTTSAGIMDHEEARRKHTGGKILGFFF.

This sequence belongs to the universal ribosomal protein uS8 family. As to quaternary structure, component of the 40S ribosomal subunit. Part of the small subunit (SSU) processome, composed of more than 70 proteins and the RNA chaperone small nucleolar RNA (snoRNA) U3.

The protein localises to the cytoplasm. The protein resides in the nucleus. It localises to the nucleolus. Functionally, component of the small ribosomal subunit. Part of the small subunit (SSU) processome, first precursor of the small eukaryotic ribosomal subunit. During the assembly of the SSU processome in the nucleolus, many ribosome biogenesis factors, an RNA chaperone and ribosomal proteins associate with the nascent pre-rRNA and work in concert to generate RNA folding, modifications, rearrangements and cleavage as well as targeted degradation of pre-ribosomal RNA by the RNA exosome. Required for erythropoiesis during embryonic development. The sequence is that of Small ribosomal subunit protein uS8 from Danio rerio (Zebrafish).